A 338-amino-acid chain; its full sequence is UPF0324 membrane protein HI_1643 (338 aa).

10 helical membrane passes run 5 to 23, 33 to 55, 62 to 84, 94 to 116, 123 to 145, 155 to 177, 222 to 239, 254 to 273, 280 to 302, and 312 to 334; these read PFYFGLIFIAIIAVLANYL, HISALIIAILLGMAIGNTIYPQF, GVLFAKGTLLRAGIVLYGFRLTF, AVVTDAIMLISTFFLTALLGIRY, LVYLTGAGCSICGAAAVMAAEPV, VAIAVVVIFGTLSIFTYPFFYTW, LRVMMLAPFLFMLSWLLT, IPWFAVLFIGVAIFNSFDLL, LFVEIDSFLLISAMAALGLTTQA, and PLVLGVLIYLWLVIGGFLVNYGI.

This sequence belongs to the UPF0324 family.

The protein resides in the cell membrane. In Haemophilus influenzae (strain ATCC 51907 / DSM 11121 / KW20 / Rd), this protein is UPF0324 membrane protein HI_1643.